The sequence spans 65 residues: MAEVRLQEGEPLENALRRFKRKVQQEDIIKEVKRHSFYLKPGEKRRVKEALARKRNRKKARKEQD.

This sequence belongs to the bacterial ribosomal protein bS21 family.

This Acidobacterium capsulatum (strain ATCC 51196 / DSM 11244 / BCRC 80197 / JCM 7670 / NBRC 15755 / NCIMB 13165 / 161) protein is Small ribosomal subunit protein bS21.